The following is a 592-amino-acid chain: UvrABC system protein C (592 aa).

The GIY-YIG domain maps to 14–91; that stretch reads KKPGCYLWKN…IKKHKPRYNI (78 aa). The UVR domain maps to 197 to 232; the sequence is DQVLKDLKEKESIASEKFDFEQAKKYLDLQKAINLI.

It belongs to the UvrC family. In terms of assembly, interacts with UvrB in an incision complex.

It is found in the cytoplasm. The UvrABC repair system catalyzes the recognition and processing of DNA lesions. UvrC both incises the 5' and 3' sides of the lesion. The N-terminal half is responsible for the 3' incision and the C-terminal half is responsible for the 5' incision. This Mycoplasmoides gallisepticum (strain R(low / passage 15 / clone 2)) (Mycoplasma gallisepticum) protein is UvrABC system protein C.